The following is a 306-amino-acid chain: UDP-3-O-acyl-N-acetylglucosamine deacetylase (306 aa).

Zn(2+) contacts are provided by H79, H238, and D242. Catalysis depends on H265, which acts as the Proton donor.

This sequence belongs to the LpxC family. Zn(2+) is required as a cofactor.

It catalyses the reaction a UDP-3-O-[(3R)-3-hydroxyacyl]-N-acetyl-alpha-D-glucosamine + H2O = a UDP-3-O-[(3R)-3-hydroxyacyl]-alpha-D-glucosamine + acetate. The protein operates within glycolipid biosynthesis; lipid IV(A) biosynthesis; lipid IV(A) from (3R)-3-hydroxytetradecanoyl-[acyl-carrier-protein] and UDP-N-acetyl-alpha-D-glucosamine: step 2/6. Catalyzes the hydrolysis of UDP-3-O-myristoyl-N-acetylglucosamine to form UDP-3-O-myristoylglucosamine and acetate, the committed step in lipid A biosynthesis. The protein is UDP-3-O-acyl-N-acetylglucosamine deacetylase of Hamiltonella defensa subsp. Acyrthosiphon pisum (strain 5AT).